The following is a 76-amino-acid chain: uncharacterized protein (76 aa).

This is an uncharacterized protein from Mycobacterium tuberculosis (strain ATCC 25618 / H37Rv).